The sequence spans 88 residues: uncharacterized protein (88 aa).

Expressed in a wide variety of tissues.

This is an uncharacterized protein from Homo sapiens (Human).